We begin with the raw amino-acid sequence, 46 residues long: U-limacoditoxin(6)-Dv61 (46 aa).

Residues 1 to 19 (MSKLLVLLMTTALATLAQA) form the signal peptide.

It belongs to the limacoditoxin-6 family. As to expression, expressed by the venom secretory cell of the spine. The spine is a cuticular structure containing a single large nucleated venom-secreting cell at its base. It is an independent unit capable of producing, storing and injecting venom. On the back of D.vulnerans caterpillars, spines are grouped together by 50 to 100 to form scoli, of which there are eight in D.vulnerans.

The protein resides in the secreted. Functionally, probable toxin. Does not show insecticidal, antimicrobial and antiparasitic activities. Does not induce increase in intracellular calcium in mouse DRG neurons, suggesting that it does not induce pain. The sequence is that of U-limacoditoxin(6)-Dv61 from Doratifera vulnerans (Mottled cup moth).